The primary structure comprises 127 residues: PanD regulatory factor (127 aa).

The N-acetyltransferase domain maps to 1–127; it reads MKLTILRLEH…TAQHDGWEKR (127 aa). CoA contacts are provided by residues 66 to 68 and 72 to 79; these read LRV and TRRRGVGQ.

Belongs to the PanZ/PanM family. In terms of assembly, interacts with PanD in the presence of CoA. Monomer.

Functionally, controls both the activation and catalytic activity of PanD in a coenzyme A (CoA)-dependent fashion. Binding of CoA or a derivative to PanM leads to interaction with PanD, which promotes the processing and activation of pro-PanD, and subsequent substrate-mediated inhibition of the active form of PanD. Lacks acetyltransferase activity. This Salmonella typhimurium (strain LT2 / SGSC1412 / ATCC 700720) protein is PanD regulatory factor.